A 328-amino-acid chain; its full sequence is PDZ and LIM domain protein 1 (328 aa).

At T2 the chain carries N-acetylthreonine. In terms of domain architecture, PDZ spans 3 to 85 (TLQIVLQGPG…NMTLTVARSE (83 aa)). Phosphoserine occurs at positions 90 and 130. Y144 carries the post-translational modification Phosphotyrosine. Residues 257 to 316 (PMCDKCGTGIVGVFVKLRERHRHPECYVCTDCGTNLKQKGHFFVEDQIYCEKHARERVTP) enclose the LIM zinc-binding domain. The Zn(2+) site is built by C259, C262, H279, C282, C285, C288, C306, and H309. A Phosphothreonine modification is found at T315. A Phosphotyrosine modification is found at Y320.

Interacts with ACTN1, ACTN2 and ACTN4. Interacts with PDLIM4.

It localises to the cytoplasm. The protein resides in the cytoskeleton. The protein localises to the myofibril. It is found in the sarcomere. Its subcellular location is the z line. Cytoskeletal protein that may act as an adapter that brings other proteins (like kinases) to the cytoskeleton. Involved in assembly, disassembly and directioning of stress fibers in fibroblasts. Required for the localization of ACTN1 and PALLD to stress fibers. Required for cell migration and in maintaining cell polarity of fibroblasts. The protein is PDZ and LIM domain protein 1 (PDLIM1) of Bos taurus (Bovine).